Here is a 105-residue protein sequence, read N- to C-terminus: Large ribosomal subunit protein eL36 (105 aa).

At Lys-62 the chain carries N6-acetyllysine.

Belongs to the eukaryotic ribosomal protein eL36 family. Component of the large ribosomal subunit.

The protein resides in the cytoplasm. It localises to the cytosol. Functionally, component of the large ribosomal subunit. The ribosome is a large ribonucleoprotein complex responsible for the synthesis of proteins in the cell. This Bos taurus (Bovine) protein is Large ribosomal subunit protein eL36 (RPL36).